We begin with the raw amino-acid sequence, 41 residues long: Cytochrome b559 subunit beta (41 aa).

Residues 16 to 32 traverse the membrane as a helical segment; it reads WLAVHALAIPTVFFLGS. Heme is bound at residue His20.

It belongs to the PsbE/PsbF family. Heterodimer of an alpha subunit and a beta subunit. PSII is composed of 1 copy each of membrane proteins PsbA, PsbB, PsbC, PsbD, PsbE, PsbF, PsbH, PsbI, PsbJ, PsbK, PsbL, PsbM, PsbT, PsbY, PsbZ, Psb30/Ycf12, at least 3 peripheral proteins of the oxygen-evolving complex and a large number of cofactors. It forms dimeric complexes. Requires heme b as cofactor.

The protein resides in the plastid. Its subcellular location is the chloroplast thylakoid membrane. Functionally, this b-type cytochrome is tightly associated with the reaction center of photosystem II (PSII). PSII is a light-driven water:plastoquinone oxidoreductase that uses light energy to abstract electrons from H(2)O, generating O(2) and a proton gradient subsequently used for ATP formation. It consists of a core antenna complex that captures photons, and an electron transfer chain that converts photonic excitation into a charge separation. The protein is Cytochrome b559 subunit beta of Euglena gracilis.